Here is a 187-residue protein sequence, read N- to C-terminus: Cerebral dopamine neurotrophic factor (187 aa).

Residues 1 to 24 (MRCISPTALVTFCAGFCISNPVLA) form the signal peptide. Intrachain disulfides connect Cys-37–Cys-124, Cys-40–Cys-113, and Cys-71–Cys-82.

This sequence belongs to the ARMET family. As to expression, expressed at high levels in the heart, skeletal muscle, testis and brain (at protein level). In the brain, detected in the cerebral cortex neurons through layers II to VI. In the hippocampus, detected in the CA1 to CA3 pyramidal regions and in the granule and polymorph layers of dentate gyrus. Weak expression in the striatum. In substantia nigra, detected in solitary cells that did not express tyrosine hydroxylase, a marker for dopaminergic neurons. Relatively high expression in the Purkinje cells of the cerebellum and in regions of the brain stem, including the locus coeruleus.

Its subcellular location is the secreted. In terms of biological role, trophic factor for dopamine neurons. Prevents the 6-hydroxydopamine (6-OHDA)-induced degeneration of dopaminergic neurons. When administered after 6-OHDA-lesioning, restores the dopaminergic function and prevents the degeneration of dopaminergic neurons in substantia nigra. The protein is Cerebral dopamine neurotrophic factor (Cdnf) of Mus musculus (Mouse).